We begin with the raw amino-acid sequence, 54 residues long: Ovomucoid (54 aa).

The region spanning 4 to 54 is the Kazal-like domain; it reads VDCSDYPKPACTLEYMPLCGSDNKTYGNKCNFCNAVVDSNGTLTLSHFGKC. 3 disulfides stabilise this stretch: cysteine 6/cysteine 36, cysteine 14/cysteine 33, and cysteine 22/cysteine 54. Asparagine 43 is a glycosylation site (N-linked (GlcNAc...) asparagine).

The protein localises to the secreted. In Dendrocygna arcuata (Wandering whistling-duck), this protein is Ovomucoid.